The following is a 911-amino-acid chain: Ribonuclease J (911 aa).

The transit peptide at Met1–Ser70 directs the protein to the chloroplast. Positions Ser58–Met90 are disordered. The span at Ser63–Lys74 shows a compositional bias: low complexity. Zn(2+)-binding residues include His175, His177, Asp179, His180, His245, and Asp267. Residues Ala336–Asn338 and His468–His472 each bind substrate. Residue His494 participates in Zn(2+) binding. 2 disordered regions span residues Val695–Asp723 and Glu735–Glu824. Composition is skewed to basic and acidic residues over residues Ser713–Glu722 and Ala783–Ser795. The span at Arg796–Asp806 shows a compositional bias: acidic residues. The 65-residue stretch at Pro813–Ile877 folds into the Myb-like domain.

The protein belongs to the metallo-beta-lactamase superfamily. RNA-metabolizing metallo-beta-lactamase-like family. Bacterial RNase J subfamily. In terms of assembly, homodimer. May be a subunit of the RNA degradosome. Requires Zn(2+) as cofactor. As to expression, moslty expressed in inflorescences, seedlings, leaves, flowers and flower buds, and, to a lower extent, in stems, siliques and roots.

Its subcellular location is the plastid. It localises to the chloroplast. In terms of biological role, essential protein required during embryogenesis, especially in initiating and maintaining the organization of shoot apical meristems (SAMs), cotyledons, and hypocotyls. Involved in auxin-mediated pathways during embryogenesis. RNase that has both endonuclease and 5'-3' exonuclease activities. Involved in RNA surveillance to prevent overaccumulation of antisense RNA. Probably involved in maturation of rRNA and in some organisms also mRNA maturation and/or decay. In Arabidopsis thaliana (Mouse-ear cress), this protein is Ribonuclease J.